The primary structure comprises 523 residues: Glycine betaine transporter 1 (523 aa).

12 consecutive transmembrane segments (helical) span residues 33 to 53 (VFGI…VLDA), 71 to 91 (FDWL…ALIV), 109 to 129 (SFMS…LMFW), 165 to 185 (FHWG…LAFF), 214 to 234 (IVDI…LGLG), 251 to 271 (GLGL…VSVV), 286 to 306 (MVVA…ASLG), 337 to 357 (WTVF…MFIA), 372 to 392 (VLIV…GLAI), 420 to 440 (VLPF…VFFI), 467 to 487 (VFWA…GGSE), and 496 to 516 (AIST…SLLM).

It belongs to the BCCT transporter (TC 2.A.15) family.

The protein localises to the cell inner membrane. Its function is as follows. Involved in the uptake of the osmoprotectant glycine betaine. The chain is Glycine betaine transporter 1 from Vibrio parahaemolyticus serotype O3:K6 (strain RIMD 2210633).